The primary structure comprises 189 residues: MSWFGFFDPDFDDFFGRPRKYATEVPPNFNPRKIAQGDNGKGQQVSRYGAGAGHPHRALARRDDFFDDFWKNFSSGKYFVGFDDNVKTTEESDKYVVSYDQENLSPDEVNVDFDKQENELIITVTQETEKDGTKKSSTFHSNLKFEKPVNFDDISAEIGEQGVQVTLPKVHADHEKIVNIPISKAAAKK.

The disordered stretch occupies residues 26–53 (PPNFNPRKIAQGDNGKGQQVSRYGAGAG). In terms of domain architecture, sHSP spans 77 to 183 (KYFVGFDDNV…HEKIVNIPIS (107 aa)).

Belongs to the small heat shock protein (HSP20) family.

In terms of biological role, heat shock protein required for pathogenicity. Mediates thermotolerance and adaptation to oxidative stress and ethanol-induced stress. Required for invasive growth and filament formation under various filament inducing conditions. Plays a role in the capacity of damaging human-derived endothelial and oral epithelial cells during infection. Potentiates resistance to antifungal drugs, as well as resistance to killing by human neutrophils. Plays a major role in trehalose homeostasis in response to elevated temperatures. Regulates CEK1 activation by phosphorylation in response to elevated temperatures. The protein is Small heat shock protein 21 (HSP21) of Candida albicans (strain SC5314 / ATCC MYA-2876) (Yeast).